We begin with the raw amino-acid sequence, 250 residues long: Flavin-dependent thymidylate synthase (250 aa).

One can recognise a ThyX domain in the interval 7–233 (LRVQLIAKTE…PQVFSDFEIT (227 aa)). Residues serine 71, 95–97 (RHR), and glutamine 103 contribute to the FAD site. DUMP is bound by residues 92-95 (ELIR), 103-107 (QLSQR), and arginine 172. The ThyX motif signature appears at 95 to 105 (RHRHFSYSQLS). FAD contacts are provided by residues 188–190 (NYR) and histidine 194. Residue arginine 199 coordinates dUMP. The active-site Involved in ionization of N3 of dUMP, leading to its activation is the arginine 199.

It belongs to the thymidylate synthase ThyX family. In terms of assembly, homotetramer. The cofactor is FAD.

The enzyme catalyses dUMP + (6R)-5,10-methylene-5,6,7,8-tetrahydrofolate + NADPH + H(+) = dTMP + (6S)-5,6,7,8-tetrahydrofolate + NADP(+). Its pathway is pyrimidine metabolism; dTTP biosynthesis. In terms of biological role, catalyzes the reductive methylation of 2'-deoxyuridine-5'-monophosphate (dUMP) to 2'-deoxythymidine-5'-monophosphate (dTMP) while utilizing 5,10-methylenetetrahydrofolate (mTHF) as the methyl donor, and NADPH and FADH(2) as the reductant. This chain is Flavin-dependent thymidylate synthase, found in Mycolicibacterium gilvum (strain PYR-GCK) (Mycobacterium gilvum (strain PYR-GCK)).